Reading from the N-terminus, the 310-residue chain is MRVILAPMQGVLDPFVRELLTEVNDYDLCITEFVRVVDQLLPEKVFYRLCPELKNQGFTSSGTPVRVQLLGQHPKCLAENAIRAIDLGSHGIDLNCGCPSKTVNGSNGGAALLKQPELIYRATQALRRAVPSEFPVSVKVRLGWDDISQAFEIADAVEQGGATEITVHGRTKADGYRADRINWKKISEVRERLSIPVIANGEIWHWQDGQDCLSQTGCQDLMVGRGALNIPNLSHVLKSNAEKMPWYEIQKILQKYANVENEYDSGFYHVARIKQWLRYLNKEYNEANQVFDKIKTCQTAEDLKLRLNEK.

FMN is bound by residues 7 to 9 (PMQ) and glutamine 68. Cysteine 98 (proton donor) is an active-site residue. FMN-binding positions include lysine 139, 200–202 (NGE), and 224–225 (GR).

Belongs to the Dus family. DusC subfamily. FMN is required as a cofactor.

It catalyses the reaction 5,6-dihydrouridine(16) in tRNA + NADP(+) = uridine(16) in tRNA + NADPH + H(+). The enzyme catalyses 5,6-dihydrouridine(16) in tRNA + NAD(+) = uridine(16) in tRNA + NADH + H(+). Catalyzes the synthesis of 5,6-dihydrouridine (D), a modified base found in the D-loop of most tRNAs, via the reduction of the C5-C6 double bond in target uridines. Specifically modifies U16 in tRNAs. This is tRNA-dihydrouridine(16) synthase from Haemophilus influenzae (strain ATCC 51907 / DSM 11121 / KW20 / Rd).